Reading from the N-terminus, the 280-residue chain is 2-dehydro-3-deoxyphosphooctonate aldolase (280 aa).

This sequence belongs to the KdsA family.

The protein resides in the cytoplasm. It catalyses the reaction D-arabinose 5-phosphate + phosphoenolpyruvate + H2O = 3-deoxy-alpha-D-manno-2-octulosonate-8-phosphate + phosphate. The protein operates within carbohydrate biosynthesis; 3-deoxy-D-manno-octulosonate biosynthesis; 3-deoxy-D-manno-octulosonate from D-ribulose 5-phosphate: step 2/3. Its pathway is bacterial outer membrane biogenesis; lipopolysaccharide biosynthesis. The sequence is that of 2-dehydro-3-deoxyphosphooctonate aldolase from Neisseria gonorrhoeae (strain NCCP11945).